Reading from the N-terminus, the 235-residue chain is Phosphoribosylaminoimidazole-succinocarboxamide synthase (235 aa).

It belongs to the SAICAR synthetase family.

It carries out the reaction 5-amino-1-(5-phospho-D-ribosyl)imidazole-4-carboxylate + L-aspartate + ATP = (2S)-2-[5-amino-1-(5-phospho-beta-D-ribosyl)imidazole-4-carboxamido]succinate + ADP + phosphate + 2 H(+). It participates in purine metabolism; IMP biosynthesis via de novo pathway; 5-amino-1-(5-phospho-D-ribosyl)imidazole-4-carboxamide from 5-amino-1-(5-phospho-D-ribosyl)imidazole-4-carboxylate: step 1/2. The sequence is that of Phosphoribosylaminoimidazole-succinocarboxamide synthase from Sulfolobus acidocaldarius (strain ATCC 33909 / DSM 639 / JCM 8929 / NBRC 15157 / NCIMB 11770).